A 296-amino-acid polypeptide reads, in one-letter code: Myeloid differentiation primary response protein MyD88 (296 aa).

The region spanning 32-109 (RLSLFLNVRT…DVLLELGPSI (78 aa)) is the Death domain. Residues 110 to 155 (EEDCQKYILKQQQEEAEKPLQVAAVDSSVPRTAELAGITTLDDPLG) are intermediate domain. Residues 159–293 (ERFDAFICYC…WFWTRLAKAL (135 aa)) form the TIR domain. A Phosphoserine modification is found at Ser244.

As to quaternary structure, homodimer. Also forms heterodimers with TIRAP. Binds to TLR2, TLR4, IRAK1, IRAK2 and IRAK4 via their respective TIR domains. Interacts with IL18R1. Interacts with BMX, IL1RL1, IKBKE and IRF7. Interacts with LRRFIP1 and LRRFIP2; this interaction positively regulates Toll-like receptor (TLR) signaling in response to agonist. Interacts with FLII. LRRFIP1 and LRRFIP2 compete with FLII for MYD88-binding. Interacts with IRF1. Upon IL1B treatment, forms a complex with PELI1, IRAK1, IRAK4 and TRAF6; this complex recruits MAP3K7/TAK1, TAB1 and TAB2 to mediate NF-kappa-B activation. Direct binding of SMAD6 to PELI1 prevents the complex formation and hence negatively regulates IL1R-TLR signaling and eventually NF-kappa-B-mediated gene expression. May interact with PIK3AP1. Interacts (via TIR domain) with DHX9 (via H2A and OB-fold regions); this interaction is direct. Interacts with OTUD4 deubiquitinase; the interaction is direct. In terms of processing, ubiquitinated; undergoes 'Lys-63'-linked polyubiquitination. OTUD4 specifically hydrolyzes 'Lys-63'-linked polyubiquitinated MYD88. Deubiquitinated by USP3 that cleaves 'Lys-63'-linked ubiquitin chains leading to inhibition of MYD88-induced NF-kappa-B signaling.

Its subcellular location is the cytoplasm. It localises to the nucleus. Its function is as follows. Adapter protein involved in the Toll-like receptor and IL-1 receptor signaling pathway in the innate immune response. Acts via IRAK1, IRAK2, IRF7 and TRAF6, leading to NF-kappa-B activation, cytokine secretion and the inflammatory response. Increases IL-8 transcription. Involved in IL-18-mediated signaling pathway. Activates IRF1 resulting in its rapid migration into the nucleus to mediate an efficient induction of IFN-beta, NOS2/INOS, and IL12A genes. Upon TLR8 activation by GU-rich single-stranded RNA (GU-rich RNA) derived from viruses, induces IL1B release through NLRP3 inflammasome activation. MyD88-mediated signaling in intestinal epithelial cells is crucial for maintenance of gut homeostasis and controls the expression of the antimicrobial lectin REG3G in the small intestine. The chain is Myeloid differentiation primary response protein MyD88 (MYD88) from Pan troglodytes (Chimpanzee).